The primary structure comprises 120 residues: Large ribosomal subunit protein uL18 (120 aa).

Over residues 1-10 (MKRTRTESVQ) the composition is skewed to basic and acidic residues. A disordered region spans residues 1–24 (MKRTRTESVQRRHSRIRRKVEGTP).

This sequence belongs to the universal ribosomal protein uL18 family. As to quaternary structure, part of the 50S ribosomal subunit; part of the 5S rRNA/L5/L18/L25 subcomplex. Contacts the 5S and 23S rRNAs.

Functionally, this is one of the proteins that bind and probably mediate the attachment of the 5S RNA into the large ribosomal subunit, where it forms part of the central protuberance. The chain is Large ribosomal subunit protein uL18 from Gloeothece citriformis (strain PCC 7424) (Cyanothece sp. (strain PCC 7424)).